We begin with the raw amino-acid sequence, 337 residues long: Nucleoid-associated protein PBPRA2585 (337 aa).

The protein belongs to the YejK family.

It is found in the cytoplasm. It localises to the nucleoid. This Photobacterium profundum (strain SS9) protein is Nucleoid-associated protein PBPRA2585.